The sequence spans 708 residues: Nicastrin (708 aa).

The first 27 residues, methionine 1–alanine 27, serve as a signal peptide directing secretion. Residues glycine 28 to glutamate 668 are Lumenal-facing. Asparagine 44, asparagine 54, and asparagine 128 each carry an N-linked (GlcNAc...) asparagine glycan. The cysteines at positions 49 and 61 are disulfide-linked. A disulfide bridge links cysteine 139 with cysteine 158. N-linked (GlcNAc...) asparagine glycosylation is found at asparagine 186 and asparagine 203. 2 disulfide bridges follow: cysteine 194-cysteine 212 and cysteine 229-cysteine 247. N-linked (GlcNAc...) asparagine glycans are attached at residues asparagine 263, asparagine 386, asparagine 434, asparagine 463, asparagine 505, asparagine 529, asparagine 561, asparagine 572, asparagine 579, asparagine 593, and asparagine 611. A disulfide bond links cysteine 585 and cysteine 619. Residues phenylalanine 669 to isoleucine 689 traverse the membrane as a helical segment. Residues asparagine 690–tyrosine 708 lie on the Cytoplasmic side of the membrane.

It belongs to the nicastrin family. Component of the gamma-secretase complex. The functional gamma-secretase complex is composed of at least four polypeptides: a presenilin homodimer (PSEN1 or PSEN2), nicastrin (NCSTN), APH1 (APH1A or APH1B) and PEN2. Binds to proteolytic processed C-terminal fragments C83 and C99 of the amyloid precursor protein (APP). Interacts with PSEN1 and PSEN2. Post-translationally, N-glycosylated.

It is found in the membrane. It localises to the cytoplasmic vesicle membrane. The protein resides in the melanosome. Functionally, essential subunit of the gamma-secretase complex, an endoprotease complex that catalyzes the intramembrane cleavage of integral membrane proteins such as Notch receptors and APP (amyloid-beta precursor protein). The gamma-secretase complex plays a role in Notch and Wnt signaling cascades and regulation of downstream processes via its role in processing key regulatory proteins, and by regulating cytosolic CTNNB1 levels. This chain is Nicastrin (Ncstn), found in Mus musculus (Mouse).